We begin with the raw amino-acid sequence, 120 residues long: Vanadium-binding protein 2 (120 aa).

The N-terminal stretch at 1-20 (MSKVIFALVLVVVLVACINA) is a signal peptide. Residues 21-29 (TYVEFEEAY) constitute a propeptide that is removed on maturation. Intrachain disulfides connect cysteine 34/cysteine 88, cysteine 38/cysteine 84, cysteine 42/cysteine 81, cysteine 48/cysteine 74, cysteine 52/cysteine 69, cysteine 56/cysteine 65, cysteine 92/cysteine 119, cysteine 97/cysteine 114, and cysteine 101/cysteine 111.

In terms of assembly, interacts with VIP1. Expressed in vanadocytes.

The protein resides in the cytoplasm. Its function is as follows. Acts as a vanadium reductase which may form an electron transfer cascade in conjunction with NADPH and glutathione through thiol disulfide exchange reactions. Partial cleavage of its disulfide bonds results in the reduction of V(5+) to V(4+). Binds up to 24 V(4+) ions per protein at pH 7.5. Also binds Fe(3+) and Cu(2+) and, to a lesser extent, Co(2+), Zn(2+) and Ni(2+). The protein is Vanadium-binding protein 2 of Ascidia sydneiensis samea (Vanadium-rich ascidian).